Reading from the N-terminus, the 395-residue chain is RNA demethylase ALKBH5 (395 aa).

Disordered stretches follow at residues M1–R28 and A47–A83. An N-acetylalanine modification is found at A2. Residue K58 forms a Glycyl lysine isopeptide (Lys-Gly) (interchain with G-Cter in ubiquitin) linkage. Over residues K60–A83 the composition is skewed to basic and acidic residues. A phosphoserine mark is found at S65 and S70. A coiled-coil region spans residues E68 to K117. Position 72 is a phosphotyrosine (Y72). Residue K87 forms a Glycyl lysine isopeptide (Lys-Gly) (interchain with G-Cter in SUMO1) linkage. A Phosphoserine modification is found at S88. At K133 the chain carries N6-acetyllysine. Y140 is an active-site residue. 2-oxoglutarate is bound by residues N194, Y196, and H205. The cysteines at positions 231 and 268 are disulfide-linked. Residue K236 is modified to N6-acetyllysine. H267 and R278 together coordinate 2-oxoglutarate. Positions E294–H395 are disordered. Positions K296–S306 are enriched in low complexity. Residue K322 forms a Glycyl lysine isopeptide (Lys-Gly) (interchain with G-Cter in SUMO1) linkage. S326 is subject to Phosphoserine. K329 is covalently cross-linked (Glycyl lysine isopeptide (Lys-Gly) (interchain with G-Cter in SUMO2)). The span at K329–R350 shows a compositional bias: basic and acidic residues. Position 360 is an omega-N-methylarginine (R360). Residues S362, S372, S375, and S385 each carry the phosphoserine modification.

The protein belongs to the alkB family. In terms of assembly, monomer. Interacts with RBM33; promoting desumoylation by SENP1 and recruitment to N(6)-methyladenosine-containing mRNAs. Interacts (when acetylated by KAT8) with PSPC1; interaction facilitates recognition of N(6)-methyladenosine (m6A) mRNA. Requires Fe(2+) as cofactor. Post-translationally, phosphorylated at Ser-88 and Ser-326 in response to reactive oxygen species (ROS), promoting sumoylation and inactivation. In terms of processing, acetylated by KAT8 at Lys-236, promoting interaction with PSPC1, thereby facilitating recognition of N(6)-methyladenosine (m6A) mRNA by ALKBH5. Deacetylated at Lys-236 by HDAC7. Sumoylated at Lys-87 and Lys-322 by PIAS4 following phosphorylation at Ser-88 and Ser-326 in response to reactive oxygen species (ROS), inhibiting the RNA demethylase activity. Desumoylated by SENP1; relieving RNA demethylase inhibition, leading to N(6)-methyladenosine-containing mRNAs demethylation. Post-translationally, ubiquitinated at Lys-58 via 'Lys-48'-linked polyubiquitin chain, leading to its degradation by the proteasome. Deubiquitinated at Lys-58 by USP9X, promoting its stabilizazion.

The protein localises to the nucleus speckle. The enzyme catalyses an N(6)-methyladenosine in mRNA + 2-oxoglutarate + O2 = an adenosine in mRNA + formaldehyde + succinate + CO2. RNA demethylase activity is inhibited following sumoylation. Inhibition is relieved following desumoylation. Its function is as follows. Dioxygenase that specifically demethylates N(6)-methyladenosine (m6A) RNA, the most prevalent internal modification of messenger RNA (mRNA) in higher eukaryotes. Demethylates RNA by oxidative demethylation, which requires molecular oxygen, alpha-ketoglutarate and iron. Demethylation of m6A mRNA affects mRNA processing, translation and export. Can also demethylate N(6)-methyladenosine in single-stranded DNA (in vitro). Required for the late meiotic and haploid phases of spermatogenesis by mediating m6A demethylation in spermatocytes and round spermatids: m6A demethylation of target transcripts is required for correct splicing and the production of longer 3'-UTR mRNAs in male germ cells. Involved in paraspeckle assembly, a nuclear membraneless organelle, by undergoing liquid-liquid phase separation. Paraspeckle assembly is coupled with m6A demethylation of RNAs, such as NEAT1 non-coding RNA. Also acts as a negative regulator of T-cell development: inhibits gamma-delta T-cell proliferation via demethylation of JAG1 and NOTCH2 transcripts. Inhibits regulatory T-cell (Treg) recruitment by mediating demethylation and destabilization of CCL28 mRNAs. In Rattus norvegicus (Rat), this protein is RNA demethylase ALKBH5 (Alkbh5).